The following is a 92-amino-acid chain: DNA-directed RNA polymerase subunit omega (92 aa).

It belongs to the RNA polymerase subunit omega family. In terms of assembly, the RNAP catalytic core consists of 2 alpha, 1 beta, 1 beta' and 1 omega subunit. When a sigma factor is associated with the core the holoenzyme is formed, which can initiate transcription.

The enzyme catalyses RNA(n) + a ribonucleoside 5'-triphosphate = RNA(n+1) + diphosphate. In terms of biological role, promotes RNA polymerase assembly. Latches the N- and C-terminal regions of the beta' subunit thereby facilitating its interaction with the beta and alpha subunits. This chain is DNA-directed RNA polymerase subunit omega, found in Acinetobacter baumannii (strain AB307-0294).